The chain runs to 279 residues: S-methyl-5'-thioadenosine phosphorylase (279 aa).

Residues serine 13, 55–56 (RH), and 88–89 (TA) contribute to the phosphate site. Methionine 191 is a substrate binding site. Threonine 192 provides a ligand contact to phosphate. Substrate is bound at residue 215-217 (DYD).

The protein belongs to the PNP/MTAP phosphorylase family. MTAP subfamily. As to quaternary structure, homotrimer.

The protein resides in the cytoplasm. Its subcellular location is the nucleus. The catalysed reaction is S-methyl-5'-thioadenosine + phosphate = 5-(methylsulfanyl)-alpha-D-ribose 1-phosphate + adenine. It functions in the pathway amino-acid biosynthesis; L-methionine biosynthesis via salvage pathway; S-methyl-5-thio-alpha-D-ribose 1-phosphate from S-methyl-5'-thioadenosine (phosphorylase route): step 1/1. Catalyzes the reversible phosphorylation of S-methyl-5'-thioadenosine (MTA) to adenine and 5-methylthioribose-1-phosphate. Involved in the breakdown of MTA, a major by-product of polyamine biosynthesis. Responsible for the first step in the methionine salvage pathway after MTA has been generated from S-adenosylmethionine. Has broad substrate specificity with 6-aminopurine nucleosides as preferred substrates. The protein is S-methyl-5'-thioadenosine phosphorylase of Aedes aegypti (Yellowfever mosquito).